Reading from the N-terminus, the 1095-residue chain is Solute carrier family 12 member 1 (1095 aa).

Topologically, residues 1–173 are cytoplasmic; the sequence is MSVNIPSNSV…EEDVTGVVKF (173 aa). The short motif at 16 to 19 is the RFXV motif element; it reads RFQV. The disordered stretch occupies residues 26–45; the sequence is HGSGAAMSDSTDPPHYEETS. Residues Ser-57 and Ser-87 each carry the phosphoserine modification. A phosphothreonine mark is found at Thr-91, Thr-96, Thr-101, and Thr-114. A Phosphoserine modification is found at Ser-116. Residue Ser-126 is modified to Phosphoserine; by AMPK. Ser-144 carries the phosphoserine modification. A helical transmembrane segment spans residues 174 to 194; sequence GWVKGVLVRCMLNIWGVMLFI. Residues 195-197 lie on the Extracellular side of the membrane; it reads RLS. Residues 198-218 form a helical membrane-spanning segment; sequence WIVGEAGIGLGVIIIGLSVVV. Residues 219-255 are Cytoplasmic-facing; the sequence is TTLTGISMSAICTNGVVRGGGAYYLISRSLGPEFGGS. A helical membrane pass occupies residues 256–276; it reads IGLIFRFANAVRVAMYVVGFA. At 277–298 the chain is on the extracellular side; sequence ETVVDLLKESDSMMVDPTNDIR. The helical transmembrane segment at 299–319 threads the bilayer; it reads IIGSITVVILLGISVAGMEWE. The Cytoplasmic portion of the chain corresponds to 320 to 323; it reads AKAQ. Residues 324-344 form a helical membrane-spanning segment; the sequence is VILLVILLIGIANFFIGTVIP. Residues 345–375 lie on the Extracellular side of the membrane; sequence SNNEKKSRGFFNYQASIFAENFGPSFTEGEG. A helical transmembrane segment spans residues 376–396; the sequence is FFSVFAIFFPAATGILAGANI. Over 397-413 the chain is Cytoplasmic; that stretch reads SGDLEDPQDAIPRGTML. Residues 414-434 form a helical membrane-spanning segment; sequence AIFITTVAYIGVAICVRACVV. Residues 435-546 are Extracellular-facing; sequence RDATGSMNDT…NNEPLRGYFL (112 aa). Residues Asn-442 and Asn-452 are each glycosylated (N-linked (GlcNAc...) asparagine). The next 2 membrane-spanning stretches (helical) occupy residues 547 to 567 and 568 to 588; these read TFVIAMAFILIAELNVIAPII and SNFFLASYALINFSCFHASYA. The Extracellular segment spans residues 589–605; it reads KSPGWRPAYGIYNMWVS. A helical membrane pass occupies residues 606–626; the sequence is LFGAILCCAVMFVINWWAAVI. Residues 627 to 1095 are Cytoplasmic-facing; it reads TYVIELFLYI…NHKNVLTFYS (469 aa).

Belongs to the SLC12A transporter family. When phosphorylated, interacts with PPP3CB. Phosphorylated at Ser-87, Thr-96 and Thr-101 by OXSR1/OSR1 and STK39/SPAK downstream of WNK kinases (WNK1, WNK2, WNK3 or WNK4), promoting its activity. Expressed predominantly in kidney (at protein level).

Its subcellular location is the apical cell membrane. It catalyses the reaction K(+)(out) + 2 chloride(out) + Na(+)(out) = K(+)(in) + 2 chloride(in) + Na(+)(in). Activated following phosphorylation by OXSR1/OSR1 and STK39/SPAK downstream of WNK kinases (WNK1, WNK2, WNK3 or WNK4). Its function is as follows. Renal sodium, potassium and chloride ion cotransporter that mediates the transepithelial NaCl reabsorption in the thick ascending limb and plays an essential role in the urinary concentration and volume regulation. Electrically silent transporter system. This chain is Solute carrier family 12 member 1 (Slc12a1), found in Rattus norvegicus (Rat).